Consider the following 297-residue polypeptide: Formamidopyrimidine-DNA glycosylase (297 aa).

Pro2 (schiff-base intermediate with DNA) is an active-site residue. Glu3 acts as the Proton donor in catalysis. Lys58 serves as the catalytic Proton donor; for beta-elimination activity. Positions 106, 125, and 168 each coordinate DNA. An FPG-type zinc finger spans residues 259-295; that stretch reads RVYDREGLACTARGCRGRVRRIVQAGRSTFYCETCQP. Catalysis depends on Arg285, which acts as the Proton donor; for delta-elimination activity.

The protein belongs to the FPG family. In terms of assembly, monomer. The cofactor is Zn(2+).

It carries out the reaction Hydrolysis of DNA containing ring-opened 7-methylguanine residues, releasing 2,6-diamino-4-hydroxy-5-(N-methyl)formamidopyrimidine.. It catalyses the reaction 2'-deoxyribonucleotide-(2'-deoxyribose 5'-phosphate)-2'-deoxyribonucleotide-DNA = a 3'-end 2'-deoxyribonucleotide-(2,3-dehydro-2,3-deoxyribose 5'-phosphate)-DNA + a 5'-end 5'-phospho-2'-deoxyribonucleoside-DNA + H(+). In terms of biological role, involved in base excision repair of DNA damaged by oxidation or by mutagenic agents. Acts as a DNA glycosylase that recognizes and removes damaged bases. Has a preference for oxidized purines, such as 7,8-dihydro-8-oxoguanine (8-oxoG). Has AP (apurinic/apyrimidinic) lyase activity and introduces nicks in the DNA strand. Cleaves the DNA backbone by beta-delta elimination to generate a single-strand break at the site of the removed base with both 3'- and 5'-phosphates. This Methylobacterium sp. (strain 4-46) protein is Formamidopyrimidine-DNA glycosylase.